We begin with the raw amino-acid sequence, 238 residues long: Ribosomal RNA small subunit methyltransferase G (238 aa).

S-adenosyl-L-methionine contacts are provided by residues Gly77, Phe82, 128–129, and Arg146; that span reads AE. Positions 216–238 are disordered; sequence KKRQTPKKYPRKPGTPNKEPLLK.

This sequence belongs to the methyltransferase superfamily. RNA methyltransferase RsmG family.

It localises to the cytoplasm. Its function is as follows. Specifically methylates the N7 position of guanine in position 535 of 16S rRNA. The chain is Ribosomal RNA small subunit methyltransferase G from Macrococcus caseolyticus (strain JCSC5402) (Macrococcoides caseolyticum).